The following is a 773-amino-acid chain: Beta-hexosaminidase B (773 aa).

The first 19 residues, 1–19 (MKFNRLMALLFGVSSPLYA), serve as a signal peptide directing secretion. 3 disulfide bridges follow: Cys-46–Cys-53, Cys-389–Cys-397, and Cys-496–Cys-542. Glu-531 (proton donor) is an active-site residue.

It belongs to the glycosyl hydrolase 20 family.

The catalysed reaction is Hydrolysis of terminal non-reducing N-acetyl-D-hexosamine residues in N-acetyl-beta-D-hexosaminides.. This is Beta-hexosaminidase B (nag096) from Pseudoalteromonas piscicida.